A 160-amino-acid chain; its full sequence is NADH-quinone oxidoreductase subunit B (160 aa).

The [4Fe-4S] cluster site is built by C37, C38, C102, and C132.

It belongs to the complex I 20 kDa subunit family. As to quaternary structure, NDH-1 is composed of 14 different subunits. Subunits NuoB, C, D, E, F, and G constitute the peripheral sector of the complex. [4Fe-4S] cluster serves as cofactor.

Its subcellular location is the cell membrane. The catalysed reaction is a quinone + NADH + 5 H(+)(in) = a quinol + NAD(+) + 4 H(+)(out). NDH-1 shuttles electrons from NADH, via FMN and iron-sulfur (Fe-S) centers, to quinones in the respiratory chain. Couples the redox reaction to proton translocation (for every two electrons transferred, four hydrogen ions are translocated across the cytoplasmic membrane), and thus conserves the redox energy in a proton gradient. This Polynucleobacter asymbioticus (strain DSM 18221 / CIP 109841 / QLW-P1DMWA-1) (Polynucleobacter necessarius subsp. asymbioticus) protein is NADH-quinone oxidoreductase subunit B.